The sequence spans 230 residues: DNA mismatch repair protein MutH (230 aa).

This sequence belongs to the MutH family.

The protein resides in the cytoplasm. Its function is as follows. Sequence-specific endonuclease that cleaves unmethylated GATC sequences. It is involved in DNA mismatch repair. In Citrobacter koseri (strain ATCC BAA-895 / CDC 4225-83 / SGSC4696), this protein is DNA mismatch repair protein MutH.